Here is a 495-residue protein sequence, read N- to C-terminus: Glycerol kinase (495 aa).

Thr11 contributes to the ADP binding site. The ATP site is built by Thr11, Thr12, and Ser13. Residue Thr11 coordinates sn-glycerol 3-phosphate. Sn-glycerol 3-phosphate-binding residues include Arg81, Glu82, Tyr133, and Asp242. 5 residues coordinate glycerol: Arg81, Glu82, Tyr133, Asp242, and Gln243. Residues Thr264, Gly307, Gly407, and Asn411 each contribute to the ADP site. The ATP site is built by Thr264, Gly307, and Gly407.

This sequence belongs to the FGGY kinase family.

It carries out the reaction glycerol + ATP = sn-glycerol 3-phosphate + ADP + H(+). The protein operates within polyol metabolism; glycerol degradation via glycerol kinase pathway; sn-glycerol 3-phosphate from glycerol: step 1/1. Inhibited by fructose 1,6-bisphosphate (FBP). Key enzyme in the regulation of glycerol uptake and metabolism. Catalyzes the phosphorylation of glycerol to yield sn-glycerol 3-phosphate. The sequence is that of Glycerol kinase from Thermus brockianus.